We begin with the raw amino-acid sequence, 482 residues long: Falcipain-2b (482 aa).

The Cytoplasmic portion of the chain corresponds to 1–35 (MDYHMDYIPNEVISHQGERFVDKYVDRKILKNKKS). Residues 1–241 (MDYHMDYIPN…PLKNSKYLLD (241 aa)) constitute a propeptide, activation peptide. The short motif at 16 to 25 (QGERFVDKYV) is the Bipartite vacuolar targeting signal 1 element. A helical; Signal-anchor for type II membrane protein transmembrane segment spans residues 36 to 56 (LLVIISLSVLSVVGFILFYFT). Over 57–482 (PNFRKSDLFK…GTDAFIPLIE (426 aa)) the chain is Lumenal. An N-linked (GlcNAc...) asparagine glycan is attached at N67. Positions 84–105 (KSPNGKKFIVSKIDEALSFYDN) match the Bipartite vacuolar targeting signal 2 motif. N-linked (GlcNAc...) asparagine glycosylation occurs at N117. A Nose motif; required for the correct folding of the mature form motif is present at residues 242–258 (QINYDAVIKKYKGNENF). 4 disulfide bridges follow: C280/C321, C314/C355, C340/C360, and C409/C470. The active site involves C283. The active site involves H415. The Arm motif; binds to host hemoglobin and required for the inhibitory interaction between the propeptide and the catalytic domain signature appears at 426 to 435 (EIVNPLTKKG).

The protein belongs to the peptidase C1 family. Component of the hemozoin formation complex (HFC) composed of falcipains FP2A and/or FP2B, plasmepsins PMII, PMIII/HAP and PMIV, heme detoxifying protein HDP and falcilysin FLN. The HFC complex is involved in hemoglobin degradation and detoxification of heme in the food vacuole during the asexual blood stage.

Its subcellular location is the vacuole. It localises to the membrane. Functionally, cysteine protease which cleaves native host hemoglobin in the food vacuole during the asexual blood stage. Preferentially cleaves substrates which have a leucine at the P2 position. The polypeptide is Falcipain-2b (Plasmodium falciparum (isolate 3D7)).